We begin with the raw amino-acid sequence, 259 residues long: Global transcriptional regulator CodY (259 aa).

The segment at 1–155 is GAF domain; that stretch reads MTLLEKTRKI…GGTVVGMEIL (155 aa). Residues 203–222 constitute a DNA-binding region (H-T-H motif); the sequence is ASKIADRVGITRSVIVNALR.

The protein belongs to the CodY family.

The protein localises to the cytoplasm. In terms of biological role, DNA-binding global transcriptional regulator which is involved in the adaptive response to starvation and acts by directly or indirectly controlling the expression of numerous genes in response to nutrient availability. During rapid exponential growth, CodY is highly active and represses genes whose products allow adaptation to nutrient depletion. This Listeria monocytogenes serotype 4b (strain CLIP80459) protein is Global transcriptional regulator CodY.